A 242-amino-acid chain; its full sequence is Proteasome subunit alpha (242 aa).

It belongs to the peptidase T1A family. In terms of assembly, the 20S proteasome core is composed of 14 alpha and 14 beta subunits that assemble into four stacked heptameric rings, resulting in a barrel-shaped structure. The two inner rings, each composed of seven catalytic beta subunits, are sandwiched by two outer rings, each composed of seven alpha subunits. The catalytic chamber with the active sites is on the inside of the barrel. Has a gated structure, the ends of the cylinder being occluded by the N-termini of the alpha-subunits. Is capped by the proteasome-associated ATPase, ARC.

It is found in the cytoplasm. The protein operates within protein degradation; proteasomal Pup-dependent pathway. The formation of the proteasomal ATPase ARC-20S proteasome complex, likely via the docking of the C-termini of ARC into the intersubunit pockets in the alpha-rings, may trigger opening of the gate for substrate entry. Interconversion between the open-gate and close-gate conformations leads to a dynamic regulation of the 20S proteasome proteolysis activity. Functionally, component of the proteasome core, a large protease complex with broad specificity involved in protein degradation. The protein is Proteasome subunit alpha of Renibacterium salmoninarum (strain ATCC 33209 / DSM 20767 / JCM 11484 / NBRC 15589 / NCIMB 2235).